The following is a 179-amino-acid chain: tRNA (cytidine(56)-2'-O)-methyltransferase (179 aa).

S-adenosyl-L-methionine is bound by residues Leu-82, 112–116 (GAEKV), and 130–137 (VGNQPHSE).

It belongs to the aTrm56 family. In terms of assembly, homodimer.

The protein localises to the cytoplasm. It catalyses the reaction cytidine(56) in tRNA + S-adenosyl-L-methionine = 2'-O-methylcytidine(56) in tRNA + S-adenosyl-L-homocysteine + H(+). In terms of biological role, specifically catalyzes the AdoMet-dependent 2'-O-ribose methylation of cytidine at position 56 in tRNAs. The chain is tRNA (cytidine(56)-2'-O)-methyltransferase from Methanococcus maripaludis (strain C6 / ATCC BAA-1332).